A 182-amino-acid chain; its full sequence is uncharacterized protein (182 aa).

The disordered stretch occupies residues 40 to 182; it reads LLKTDDDDDD…EEIQRNQKGN (143 aa). Over residues 52–86 the composition is skewed to low complexity; sequence NNININNNNATITTTSTTTTTTTTSTTKTFTISTD. The segment covering 87–100 has biased composition (acidic residues); sequence NYDEDVNDDQDEGD. 2 stretches are compositionally biased toward low complexity: residues 104-134 and 148-157; these read NNNN…NNNN and DLDFNNQNNN. Residues 165–182 show a composition bias toward basic and acidic residues; it reads FLSKDDNIEEIQRNQKGN.

This is an uncharacterized protein from Dictyostelium discoideum (Social amoeba).